Reading from the N-terminus, the 535-residue chain is Bifunctional purine biosynthesis protein PurH (535 aa).

One can recognise an MGS-like domain in the interval 6 to 151; sequence TRLPVRRALI…KNHKDVAIVV (146 aa).

Belongs to the PurH family.

It carries out the reaction (6R)-10-formyltetrahydrofolate + 5-amino-1-(5-phospho-beta-D-ribosyl)imidazole-4-carboxamide = 5-formamido-1-(5-phospho-D-ribosyl)imidazole-4-carboxamide + (6S)-5,6,7,8-tetrahydrofolate. The catalysed reaction is IMP + H2O = 5-formamido-1-(5-phospho-D-ribosyl)imidazole-4-carboxamide. It functions in the pathway purine metabolism; IMP biosynthesis via de novo pathway; 5-formamido-1-(5-phospho-D-ribosyl)imidazole-4-carboxamide from 5-amino-1-(5-phospho-D-ribosyl)imidazole-4-carboxamide (10-formyl THF route): step 1/1. It participates in purine metabolism; IMP biosynthesis via de novo pathway; IMP from 5-formamido-1-(5-phospho-D-ribosyl)imidazole-4-carboxamide: step 1/1. The polypeptide is Bifunctional purine biosynthesis protein PurH (Pseudomonas putida (strain ATCC 700007 / DSM 6899 / JCM 31910 / BCRC 17059 / LMG 24140 / F1)).